A 356-amino-acid chain; its full sequence is S-adenosylmethionine:tRNA ribosyltransferase-isomerase (356 aa).

It belongs to the QueA family. Monomer.

It is found in the cytoplasm. The enzyme catalyses 7-aminomethyl-7-carbaguanosine(34) in tRNA + S-adenosyl-L-methionine = epoxyqueuosine(34) in tRNA + adenine + L-methionine + 2 H(+). It participates in tRNA modification; tRNA-queuosine biosynthesis. Functionally, transfers and isomerizes the ribose moiety from AdoMet to the 7-aminomethyl group of 7-deazaguanine (preQ1-tRNA) to give epoxyqueuosine (oQ-tRNA). The protein is S-adenosylmethionine:tRNA ribosyltransferase-isomerase of Shigella boydii serotype 18 (strain CDC 3083-94 / BS512).